Consider the following 349-residue polypeptide: Twinfilin-2-B (349 aa).

2 ADF-H domains span residues 4 to 139 and 177 to 313; these read QTGI…KHVS and GLSF…DEVH. The segment at 321–349 is disordered; sequence QAFAKPKGPAGKRGQKRLIKGPGENGEDS.

It belongs to the actin-binding proteins ADF family. Twinfilin subfamily. In terms of assembly, interacts with G-actin; ADP-actin form and capping protein (CP).

The protein resides in the cytoplasm. It localises to the cytoskeleton. It is found in the perinuclear region. Its function is as follows. Actin-binding protein involved in motile and morphological processes. Inhibits actin polymerization, likely by sequestering G-actin. The polypeptide is Twinfilin-2-B (twf2-b) (Xenopus laevis (African clawed frog)).